Here is a 334-residue protein sequence, read N- to C-terminus: GTPase Obg (334 aa).

In terms of domain architecture, Obg spans 4 to 162 (FDFIDEVKKY…GWIKLELKLL (159 aa)). One can recognise an OBG-type G domain in the interval 163-330 (AEVGLVGFPN…FKDKIWKLLH (168 aa)). GTP-binding positions include 169 to 176 (GFPNAGKS), 194 to 198 (FTTLV), 216 to 219 (DMPG), 284 to 287 (SKLD), and 311 to 313 (SSV). 2 residues coordinate Mg(2+): S176 and T196.

The protein belongs to the TRAFAC class OBG-HflX-like GTPase superfamily. OBG GTPase family. Monomer. Requires Mg(2+) as cofactor.

It localises to the cytoplasm. Functionally, an essential GTPase which binds GTP, GDP and possibly (p)ppGpp with moderate affinity, with high nucleotide exchange rates and a fairly low GTP hydrolysis rate. Plays a role in control of the cell cycle, stress response, ribosome biogenesis and in those bacteria that undergo differentiation, in morphogenesis control. The polypeptide is GTPase Obg (Amoebophilus asiaticus (strain 5a2)).